Here is a 420-residue protein sequence, read N- to C-terminus: Gamma-glutamyl phosphate reductase (420 aa).

This sequence belongs to the gamma-glutamyl phosphate reductase family.

The protein localises to the cytoplasm. The enzyme catalyses L-glutamate 5-semialdehyde + phosphate + NADP(+) = L-glutamyl 5-phosphate + NADPH + H(+). It functions in the pathway amino-acid biosynthesis; L-proline biosynthesis; L-glutamate 5-semialdehyde from L-glutamate: step 2/2. Its function is as follows. Catalyzes the NADPH-dependent reduction of L-glutamate 5-phosphate into L-glutamate 5-semialdehyde and phosphate. The product spontaneously undergoes cyclization to form 1-pyrroline-5-carboxylate. This Shewanella amazonensis (strain ATCC BAA-1098 / SB2B) protein is Gamma-glutamyl phosphate reductase.